A 238-amino-acid chain; its full sequence is Probable transcriptional regulatory protein CF0838 (238 aa).

Belongs to the TACO1 family.

The protein localises to the cytoplasm. The sequence is that of Probable transcriptional regulatory protein CF0838 from Chlamydia felis (strain Fe/C-56) (Chlamydophila felis).